A 634-amino-acid chain; its full sequence is Endoribonuclease rege-1 (634 aa).

Disordered regions lie at residues M1–H33, S90–I113, and K156–P223. Residues E97–D106 show a composition bias toward basic and acidic residues. Composition is skewed to low complexity over residues S182–S194 and S201–S217. Residues L225–E377 form the RNase NYN domain. D314 lines the Mg(2+) pocket. Residues S387–R412 form a C3H1-type zinc finger.

Belongs to the ZC3H12 family. The cofactor is Mg(2+). In terms of tissue distribution, expressed in the intestinal cells adjacent to the pharynx.

It localises to the cytoplasm. In terms of biological role, endonuclease which binds to the 3'UTR of target mRNAs and induces degradation of the transcript. Acts together with rle-1 to repress the expression of the transcription factor ets-4 by binding to the conserved ADE (alternate decay element) and RCE (REGE-1 cleavage element) stem loop structure in its 3'UTR, which controls the expression of genes in the IIS and TORC1 pathways, including those involved in lipid metabolism and autophagosome formation. May play a role in the clearance of apoptotic cell corpses. In Caenorhabditis elegans, this protein is Endoribonuclease rege-1.